The following is a 313-amino-acid chain: Malate dehydrogenase (313 aa).

NAD(+) is bound by residues 11 to 16 (GAGSIG) and aspartate 35. Arginine 84 and arginine 90 together coordinate substrate. NAD(+) contacts are provided by residues asparagine 97 and 120-122 (VTN). Substrate is bound by residues asparagine 122 and arginine 153. The active-site Proton acceptor is the histidine 177.

Belongs to the LDH/MDH superfamily. MDH type 3 family.

It carries out the reaction (S)-malate + NAD(+) = oxaloacetate + NADH + H(+). Its function is as follows. Catalyzes the reversible oxidation of malate to oxaloacetate. This is Malate dehydrogenase from Ehrlichia chaffeensis (strain ATCC CRL-10679 / Arkansas).